Here is a 406-residue protein sequence, read N- to C-terminus: Tryptophan synthase beta chain (406 aa).

K99 bears the N6-(pyridoxal phosphate)lysine mark.

It belongs to the TrpB family. As to quaternary structure, tetramer of two alpha and two beta chains. Pyridoxal 5'-phosphate is required as a cofactor.

It catalyses the reaction (1S,2R)-1-C-(indol-3-yl)glycerol 3-phosphate + L-serine = D-glyceraldehyde 3-phosphate + L-tryptophan + H2O. It participates in amino-acid biosynthesis; L-tryptophan biosynthesis; L-tryptophan from chorismate: step 5/5. In terms of biological role, the beta subunit is responsible for the synthesis of L-tryptophan from indole and L-serine. The polypeptide is Tryptophan synthase beta chain (Rhizobium etli (strain CIAT 652)).